A 261-amino-acid chain; its full sequence is Cytochrome c oxidase subunit 3 (261 aa).

At Met1 to Pro15 the chain is on the mitochondrial matrix side. A helical transmembrane segment spans residues Trp16–Trp34. Topologically, residues Phe35–Val40 are mitochondrial intermembrane. A helical membrane pass occupies residues Ala41–Thr66. Topologically, residues Phe67–Thr72 are mitochondrial matrix. Residues Pro73–Ser105 form a helical membrane-spanning segment. The Mitochondrial intermembrane portion of the chain corresponds to Leu106–Glu128. Residues Val129 to Met152 traverse the membrane as a helical segment. Residues Glu153–Asn155 lie on the Mitochondrial matrix side of the membrane. Residues Arg156 to Glu183 form a helical membrane-spanning segment. Residues Ala184–Asp190 lie on the Mitochondrial intermembrane side of the membrane. The helical transmembrane segment at Gly191 to Leu223 threads the bilayer. Topologically, residues Lys224 to His232 are mitochondrial matrix. Residues Phe233–Ile256 traverse the membrane as a helical segment. The Mitochondrial intermembrane portion of the chain corresponds to Tyr257 to Ser261.

It belongs to the cytochrome c oxidase subunit 3 family. Component of the cytochrome c oxidase (complex IV, CIV), a multisubunit enzyme composed of 14 subunits. The complex is composed of a catalytic core of 3 subunits MT-CO1, MT-CO2 and MT-CO3, encoded in the mitochondrial DNA, and 11 supernumerary subunits COX4I, COX5A, COX5B, COX6A, COX6B, COX6C, COX7A, COX7B, COX7C, COX8 and NDUFA4, which are encoded in the nuclear genome. The complex exists as a monomer or a dimer and forms supercomplexes (SCs) in the inner mitochondrial membrane with NADH-ubiquinone oxidoreductase (complex I, CI) and ubiquinol-cytochrome c oxidoreductase (cytochrome b-c1 complex, complex III, CIII), resulting in different assemblies (supercomplex SCI(1)III(2)IV(1) and megacomplex MCI(2)III(2)IV(2)).

It localises to the mitochondrion inner membrane. The catalysed reaction is 4 Fe(II)-[cytochrome c] + O2 + 8 H(+)(in) = 4 Fe(III)-[cytochrome c] + 2 H2O + 4 H(+)(out). Component of the cytochrome c oxidase, the last enzyme in the mitochondrial electron transport chain which drives oxidative phosphorylation. The respiratory chain contains 3 multisubunit complexes succinate dehydrogenase (complex II, CII), ubiquinol-cytochrome c oxidoreductase (cytochrome b-c1 complex, complex III, CIII) and cytochrome c oxidase (complex IV, CIV), that cooperate to transfer electrons derived from NADH and succinate to molecular oxygen, creating an electrochemical gradient over the inner membrane that drives transmembrane transport and the ATP synthase. Cytochrome c oxidase is the component of the respiratory chain that catalyzes the reduction of oxygen to water. Electrons originating from reduced cytochrome c in the intermembrane space (IMS) are transferred via the dinuclear copper A center (CU(A)) of subunit 2 and heme A of subunit 1 to the active site in subunit 1, a binuclear center (BNC) formed by heme A3 and copper B (CU(B)). The BNC reduces molecular oxygen to 2 water molecules using 4 electrons from cytochrome c in the IMS and 4 protons from the mitochondrial matrix. In Nanger dama (Dama gazelle), this protein is Cytochrome c oxidase subunit 3 (MT-CO3).